A 138-amino-acid chain; its full sequence is Small ribosomal subunit protein uS11 (138 aa).

Over residues Met-1–Lys-12 the composition is skewed to low complexity. The interval Met-1–Gly-28 is disordered. The segment covering Lys-13 to Lys-22 has biased composition (basic residues).

It belongs to the universal ribosomal protein uS11 family. Part of the 30S ribosomal subunit. Interacts with proteins S7 and S18. Binds to IF-3.

In terms of biological role, located on the platform of the 30S subunit, it bridges several disparate RNA helices of the 16S rRNA. Forms part of the Shine-Dalgarno cleft in the 70S ribosome. This is Small ribosomal subunit protein uS11 from Mycobacterium sp. (strain JLS).